The chain runs to 336 residues: Anthranilate phosphoribosyltransferase (336 aa).

Residues Gly-82, Gly-85–Asp-86, Thr-90, Asn-92–Thr-95, Lys-110–Ser-118, and Ser-122 contribute to the 5-phospho-alpha-D-ribose 1-diphosphate site. Gly-82 serves as a coordination point for anthranilate. A Mg(2+)-binding site is contributed by Ser-94. Asn-113 provides a ligand contact to anthranilate. Arg-168 lines the anthranilate pocket. The Mg(2+) site is built by Asp-227 and Glu-228.

This sequence belongs to the anthranilate phosphoribosyltransferase family. As to quaternary structure, homodimer. The cofactor is Mg(2+).

It carries out the reaction N-(5-phospho-beta-D-ribosyl)anthranilate + diphosphate = 5-phospho-alpha-D-ribose 1-diphosphate + anthranilate. It functions in the pathway amino-acid biosynthesis; L-tryptophan biosynthesis; L-tryptophan from chorismate: step 2/5. Its function is as follows. Catalyzes the transfer of the phosphoribosyl group of 5-phosphorylribose-1-pyrophosphate (PRPP) to anthranilate to yield N-(5'-phosphoribosyl)-anthranilate (PRA). The protein is Anthranilate phosphoribosyltransferase of Leptospira borgpetersenii serovar Hardjo-bovis (strain JB197).